We begin with the raw amino-acid sequence, 397 residues long: MGASGLVWTLTIVLIAGLMLVDYVLHVRKTHVPTLRQAVIQSATFVGIAILFGIAVVVFGGSELAVEYFACYLTDEALSVDNLFVFLVIISSFGVPRLAQQKVLLFGIAFALVTRTGFIFVGAALIENFNSAFYLFGLVLLVMAGNLARPTGLESRDAETLKRSVIIRLADRFLRTSQDYNGDRLFTVSNNKRMMTPLLLVMIAVGGTDILFAFDSIPALFGLTQNVYLVFAATAFSLLGLRQLYFLIDGLLDRLVYLSYGLAVILGFIGVKLMLEALHDNKIPFINGGKPVPTVEVSTTQSLTVIIIVLLITTAASFWSARGRAQNAMARARRYATAYLDLHYETESAERDKIFTALLAAERQINTLPTKYRMQPGQDDDLMTLLCRAHAARDAHM.

Transmembrane regions (helical) follow at residues 1–21, 39–59, 76–96, 103–123, 124–144, 194–214, 219–239, 255–275, and 301–321; these read MGAS…LMLV, VIQS…VVVF, EALS…FGVP, VLLF…FVGA, ALIE…LVMA, MMTP…LFAF, ALFG…FSLL, LVYL…KLML, and QSLT…FWSA.

Belongs to the TerC family.

The protein resides in the cell membrane. This is an uncharacterized protein from Mycobacterium bovis (strain ATCC BAA-935 / AF2122/97).